The sequence spans 968 residues: RNA polymerase-associated protein RapA (968 aa).

Residues 163–332 enclose the Helicase ATP-binding domain; it reads EVGRRFAPRV…FARLRLLDPD (170 aa). 176-183 lines the ATP pocket; the sequence is DEVGLGKT. A DEAH box motif is present at residues 278–281; sequence DEAH. The region spanning 491 to 645 is the Helicase C-terminal domain; sequence RVDWLIDFLK…TCPSGHILFN (155 aa).

The protein belongs to the SNF2/RAD54 helicase family. RapA subfamily. In terms of assembly, interacts with the RNAP. Has a higher affinity for the core RNAP than for the holoenzyme. Its ATPase activity is stimulated by binding to RNAP.

In terms of biological role, transcription regulator that activates transcription by stimulating RNA polymerase (RNAP) recycling in case of stress conditions such as supercoiled DNA or high salt concentrations. Probably acts by releasing the RNAP, when it is trapped or immobilized on tightly supercoiled DNA. Does not activate transcription on linear DNA. Probably not involved in DNA repair. The chain is RNA polymerase-associated protein RapA from Shewanella woodyi (strain ATCC 51908 / MS32).